A 373-amino-acid chain; its full sequence is Histidinol-phosphate aminotransferase (373 aa).

The residue at position 233 (K233) is an N6-(pyridoxal phosphate)lysine.

The protein belongs to the class-II pyridoxal-phosphate-dependent aminotransferase family. Histidinol-phosphate aminotransferase subfamily. As to quaternary structure, homodimer. Pyridoxal 5'-phosphate is required as a cofactor.

The enzyme catalyses L-histidinol phosphate + 2-oxoglutarate = 3-(imidazol-4-yl)-2-oxopropyl phosphate + L-glutamate. It functions in the pathway amino-acid biosynthesis; L-histidine biosynthesis; L-histidine from 5-phospho-alpha-D-ribose 1-diphosphate: step 7/9. This is Histidinol-phosphate aminotransferase from Nitratidesulfovibrio vulgaris (strain ATCC 29579 / DSM 644 / CCUG 34227 / NCIMB 8303 / VKM B-1760 / Hildenborough) (Desulfovibrio vulgaris).